The following is a 169-amino-acid chain: Peptide deformylase (169 aa).

Positions 91 and 133 each coordinate Fe cation. Glutamate 134 is a catalytic residue. Histidine 137 contributes to the Fe cation binding site.

It belongs to the polypeptide deformylase family. Fe(2+) is required as a cofactor.

The enzyme catalyses N-terminal N-formyl-L-methionyl-[peptide] + H2O = N-terminal L-methionyl-[peptide] + formate. Removes the formyl group from the N-terminal Met of newly synthesized proteins. Requires at least a dipeptide for an efficient rate of reaction. N-terminal L-methionine is a prerequisite for activity but the enzyme has broad specificity at other positions. The sequence is that of Peptide deformylase from Hydrogenovibrio crunogenus (strain DSM 25203 / XCL-2) (Thiomicrospira crunogena).